A 242-amino-acid polypeptide reads, in one-letter code: GATA zinc finger domain-containing protein 1 (242 aa).

The segment at 9-33 (CAVCKTQSSSMWKKGNQGEILCNGC) adopts a GATA-type zinc-finger fold. The tract at residues 44–85 (GASASSTIQQNNGGGKQSKQEIHRRSARLRSTKYKAPASEKK) is disordered. Low complexity predominate over residues 45 to 54 (ASASSTIQQN).

Its subcellular location is the nucleus. In terms of biological role, component of some chromatin complex recruited to chromatin sites methylated 'Lys-4' of histone H3 (H3K4me), with a preference for trimethylated form (H3K4me3). The protein is GATA zinc finger domain-containing protein 1 (gatad1) of Danio rerio (Zebrafish).